The sequence spans 264 residues: Acyl-[acyl-carrier-protein]--UDP-N-acetylglucosamine O-acyltransferase (264 aa).

This sequence belongs to the transferase hexapeptide repeat family. LpxA subfamily. As to quaternary structure, homotrimer.

The protein localises to the cytoplasm. It carries out the reaction a (3R)-hydroxyacyl-[ACP] + UDP-N-acetyl-alpha-D-glucosamine = a UDP-3-O-[(3R)-3-hydroxyacyl]-N-acetyl-alpha-D-glucosamine + holo-[ACP]. It participates in glycolipid biosynthesis; lipid IV(A) biosynthesis; lipid IV(A) from (3R)-3-hydroxytetradecanoyl-[acyl-carrier-protein] and UDP-N-acetyl-alpha-D-glucosamine: step 1/6. Involved in the biosynthesis of lipid A, a phosphorylated glycolipid that anchors the lipopolysaccharide to the outer membrane of the cell. The polypeptide is Acyl-[acyl-carrier-protein]--UDP-N-acetylglucosamine O-acyltransferase (Albidiferax ferrireducens (strain ATCC BAA-621 / DSM 15236 / T118) (Rhodoferax ferrireducens)).